A 398-amino-acid chain; its full sequence is GPI mannosyltransferase 1 (398 aa).

Transmembrane regions (helical) follow at residues 4 to 24 (LKYLITFSILLRFGFFFFGLY), 79 to 99 (WYHFGKLLFMVSDVITGLIIL), 114 to 136 (MILSSIWLLNPMVITISTRGSAE), 156 to 176 (VILSAIWLGLSIHFKIYPIIY), 209 to 229 (IIITLTTLAVVNYLMFLKYGW), 271 to 291 (IEKIAFVPQLLLSAVIIPLIF), 305 to 325 (FVFVAFNKVITSQYFIWFLIF), 341 to 361 (ITGISCLLLWIISQATWLYFA), and 375 to 395 (GLMYSSVFFFLSNCWCTMKFI).

The protein belongs to the PIGM family.

It localises to the endoplasmic reticulum membrane. The protein operates within glycolipid biosynthesis; glycosylphosphatidylinositol-anchor biosynthesis. Its function is as follows. Mannosyltransferase involved in glycosylphosphatidylinositol-anchor biosynthesis. Transfers the first alpha-1,4-mannose to GlcN-acyl-PI during GPI precursor assembly. Required for cell wall integrity. The chain is GPI mannosyltransferase 1 (GPI14) from Candida albicans (strain SC5314 / ATCC MYA-2876) (Yeast).